We begin with the raw amino-acid sequence, 208 residues long: Ubiquinone biosynthesis protein COQ4 homolog, mitochondrial (208 aa).

Residues H105, D106, H109, and E122 each contribute to the Zn(2+) site.

This sequence belongs to the COQ4 family. In terms of assembly, component of a multi-subunit COQ enzyme complex. The cofactor is Zn(2+).

The protein localises to the mitochondrion inner membrane. It catalyses the reaction a 4-hydroxy-3-methoxy-5-(all-trans-polyprenyl)benzoate + H(+) = a 2-methoxy-6-(all-trans-polyprenyl)phenol + CO2. It functions in the pathway cofactor biosynthesis; ubiquinone biosynthesis. In terms of biological role, lyase that catalyzes the C1-decarboxylation of 4-hydroxy-3-methoxy-5-(all-trans-polyprenyl)benzoic acid into 2-methoxy-6-(all-trans-polyprenyl)phenol during ubiquinone biosynthesis. This chain is Ubiquinone biosynthesis protein COQ4 homolog, mitochondrial, found in Nematostella vectensis (Starlet sea anemone).